Reading from the N-terminus, the 152-residue chain is Melatonin receptor type 1B (152 aa).

Residues 1 to 12 (HSFVYEKLFSLW) are Cytoplasmic-facing. A helical membrane pass occupies residues 13-33 (NTILYVCLIWTLTVVATVPNF). Topologically, residues 34–57 (FVGSLEYDPRIYSCTFVQTVSSSY) are extracellular. A helical membrane pass occupies residues 58 to 78 (TITVVVIHFILPITVVTFCYL). The Cytoplasmic portion of the chain corresponds to 79–110 (RIWILVIQVRRKVKSEFKPRMKQSDFRNFLTM). A helical membrane pass occupies residues 111-131 (FVVFVIFAFCWAPLNFIGLAV). The Extracellular segment spans residues 132 to 144 (SINPTEVAPKIPE). A helical membrane pass occupies residues 145–152 (WLFVVSYF).

It belongs to the G-protein coupled receptor 1 family.

The protein resides in the cell membrane. High affinity receptor for melatonin. The activity of this receptor is mediated by pertussis toxin sensitive G proteins that inhibits adenylate cyclase activity. The sequence is that of Melatonin receptor type 1B (mtnr1b) from Xenopus laevis (African clawed frog).